The primary structure comprises 288 residues: tRNA dimethylallyltransferase (288 aa).

An ATP-binding site is contributed by 2-9 (GPTAAGKS). 4–9 (TAAGKS) lines the substrate pocket. Residues 27 to 30 (DSMQ) are interaction with substrate tRNA.

The protein belongs to the IPP transferase family. In terms of assembly, monomer. It depends on Mg(2+) as a cofactor.

The catalysed reaction is adenosine(37) in tRNA + dimethylallyl diphosphate = N(6)-dimethylallyladenosine(37) in tRNA + diphosphate. Its function is as follows. Catalyzes the transfer of a dimethylallyl group onto the adenine at position 37 in tRNAs that read codons beginning with uridine, leading to the formation of N6-(dimethylallyl)adenosine (i(6)A). This Frankia alni (strain DSM 45986 / CECT 9034 / ACN14a) protein is tRNA dimethylallyltransferase.